The chain runs to 103 residues: UPF0132 membrane protein AF_0105 (103 aa).

The next 3 membrane-spanning stretches (helical) occupy residues 5–25 (VAGA…LLME), 35–55 (AMQS…LSFI), and 58–78 (IGVL…LVCI).

The protein belongs to the UPF0132 family.

The protein localises to the cell membrane. This Archaeoglobus fulgidus (strain ATCC 49558 / DSM 4304 / JCM 9628 / NBRC 100126 / VC-16) protein is UPF0132 membrane protein AF_0105.